The sequence spans 153 residues: Cytochrome c-type biogenesis protein CcmE (153 aa).

The Cytoplasmic segment spans residues 1 to 8 (MTPVQRRR). A helical; Signal-anchor for type II membrane protein membrane pass occupies residues 9–29 (LAWVLLALLASGLATALVAMA). Over 30 to 153 (LERNIAYLYT…DVPVTAPEVR (124 aa)) the chain is Extracellular. 2 residues coordinate heme: His-123 and Tyr-127.

The protein belongs to the CcmE/CycJ family.

The protein localises to the cell membrane. Its function is as follows. Heme chaperone required for the biogenesis of c-type cytochromes. Transiently binds heme delivered by CcmC and transfers the heme to apo-cytochromes in a process facilitated by CcmF and CcmH. This Stenotrophomonas maltophilia (strain K279a) protein is Cytochrome c-type biogenesis protein CcmE.